The sequence spans 309 residues: Homoserine O-succinyltransferase (309 aa).

The Acyl-thioester intermediate role is filled by Cys142. Residues Lys163 and Ser192 each contribute to the substrate site. His235 (proton acceptor) is an active-site residue. Glu237 is a catalytic residue. Arg249 is a binding site for substrate.

It belongs to the MetA family. In terms of assembly, homodimer.

The protein localises to the cytoplasm. It catalyses the reaction L-homoserine + succinyl-CoA = O-succinyl-L-homoserine + CoA. The protein operates within amino-acid biosynthesis; L-methionine biosynthesis via de novo pathway; O-succinyl-L-homoserine from L-homoserine: step 1/1. In terms of biological role, transfers a succinyl group from succinyl-CoA to L-homoserine, forming succinyl-L-homoserine. The polypeptide is Homoserine O-succinyltransferase (Shigella sonnei (strain Ss046)).